The following is a 227-amino-acid chain: Endo-1,4-beta-xylanase 11A (227 aa).

The signal sequence occupies residues 1–36; that stretch reads MVSASSLLLAASAIAGVFSAPAAAPVSENLNVLQER. The region spanning 37–227 is the GH11 domain; that stretch reads ALTSSATGTS…SSGSASITVS (191 aa). The necrosis inducing domain stretch occupies residues 112 to 136; that stretch reads VYGWTTSPLIEYYIVEDFGTYDPSS. The active-site Nucleophile is E122. The active-site Proton donor is the E214.

The protein belongs to the glycosyl hydrolase 11 (cellulase G) family.

It is found in the secreted. It catalyses the reaction Endohydrolysis of (1-&gt;4)-beta-D-xylosidic linkages in xylans.. The protein operates within glycan degradation; xylan degradation. Significantly inhibited by the wheat xylanase inhibiting protein I (XIP-I) and the proteinaceous endoxylanase Triticum aestivum xylanase inhibitors I (TAXI-I), whereas no inhibition is detected with TAXI-II. Endo-1,4-beta-xylanase involved in the hydrolysis of xylan, a major structural heterogeneous polysaccharide found in plant biomass representing the second most abundant polysaccharide in the biosphere, after cellulose. Required for plant infection and the appearance of secondary lesions. Is able to induce necrosis on leaves, seedling growth inhibition, induction of a ROS burst, electrolyte leakage, cytoplasm shrinkage, autofluorescence, cell death, and induction of defense genes, and this abilities are independent of the catalytic activity. Only exhibits elicitor activity in certain plants such as tomato, but not in N.benthamiana. This Botryotinia fuckeliana (strain B05.10) (Noble rot fungus) protein is Endo-1,4-beta-xylanase 11A.